Here is a 302-residue protein sequence, read N- to C-terminus: MASSDGDRLCRSNAVRRKTTPSYSGQYRTARRSVVVGPPDDSDDSLGYITTVGADSPSPVYADLYFEHKNTTPRVHQPNDSSGSEDDFEDIDEVVAAFREARLRHELVEDAVYENPLSVEKPSRSFTKNAAVKPKLEDSPKRAPPGAGAIASGRPISFSTAPKTATSSWCGPTPSYNKRVFCEAVRRVAAMQAQKAAEAAWNSNPPRNNAELDRLLTGAVIRITVHEGLNLIQAANEADLGEGASVSKRGHNRKTGDLQGGMGNEPMYAQVRKPKSRTDTQTTGRITNRSRARSASRTDARK.

Positions 1-10 (MASSDGDRLC) are enriched in basic and acidic residues. 2 disordered regions span residues 1 to 42 (MASS…PDDS) and 125 to 167 (SFTK…TATS). Positions 154–244 (RPISFSTAPK…ANEADLGEGA (91 aa)) are interaction with gE. Over residues 157–167 (SFSTAPKTATS) the composition is skewed to polar residues. The short motif at 212–224 (LDRLLTGAVIRIT) is the Nuclear export signal element. The tract at residues 243 to 302 (GASVSKRGHNRKTGDLQGGMGNEPMYAQVRKPKSRTDTQTTGRITNRSRARSASRTDARK) is disordered.

This sequence belongs to the alphaherpesvirinae VP22 tegument protein family. As to quaternary structure, interacts with gE (via C-terminus); this interaction is necessary for the recruitment of VP22/ORF9 to the Golgi and its packaging into virions. Interacts with gM (via C-terminus). Interacts with VP16/ORF10; this interaction allows the formation of a tripartite complex composed of VP16/ORF10, VP22/ORF9 and VHS/ORF17. Interacts with the capsid-binding protein ORF44. Interacts with host CGAS. Highly phosphorylated in the host cell. Packaging is selective for underphosphorylated forms.

Its subcellular location is the virion tegument. It localises to the host cytoplasm. It is found in the host nucleus. The protein resides in the host Golgi apparatus. Tegument protein that plays different roles during the time course of infection. Participates in both the accumulation of viral mRNAs and viral protein translation at late time of infection. Modulates the RNase activity of the virion host shutoff protein ORF17 probably to ensure necessary levels of key cellular mRNAs and proteins. Plays a role in microtubule reorganization that occurs after viral infection by stabilizing microtubule network. Plays a role in the inhibition of host innate immune system by targeting the CGAS enzymatic activity which is the principal cytosolic DNA sensor that detects invading viral DNA. Acts by mediating disruption of liquid-like droplets in which CGAS is activated, thereby preventing CGAS activity. The polypeptide is Tegument protein VP22 (Varicella-zoster virus (strain Oka vaccine) (HHV-3)).